A 284-amino-acid chain; its full sequence is 4-diphosphocytidyl-2-C-methyl-D-erythritol kinase (284 aa).

Lys9 is a catalytic residue. 90–100 (PLVSGLGGDSS) lines the ATP pocket. Asp132 is a catalytic residue.

This sequence belongs to the GHMP kinase family. IspE subfamily.

It carries out the reaction 4-CDP-2-C-methyl-D-erythritol + ATP = 4-CDP-2-C-methyl-D-erythritol 2-phosphate + ADP + H(+). Its pathway is isoprenoid biosynthesis; isopentenyl diphosphate biosynthesis via DXP pathway; isopentenyl diphosphate from 1-deoxy-D-xylulose 5-phosphate: step 3/6. Its function is as follows. Catalyzes the phosphorylation of the position 2 hydroxy group of 4-diphosphocytidyl-2C-methyl-D-erythritol. The polypeptide is 4-diphosphocytidyl-2-C-methyl-D-erythritol kinase (Dehalococcoides mccartyi (strain ATCC BAA-2100 / JCM 16839 / KCTC 5957 / BAV1)).